A 366-amino-acid polypeptide reads, in one-letter code: Ribosomal RNA large subunit methyltransferase M (366 aa).

S-adenosyl-L-methionine-binding positions include serine 188, 221-224, aspartate 240, aspartate 260, and aspartate 277; that span reads CPGG. The active-site Proton acceptor is the lysine 306.

The protein belongs to the class I-like SAM-binding methyltransferase superfamily. RNA methyltransferase RlmE family. RlmM subfamily. In terms of assembly, monomer.

The protein resides in the cytoplasm. It carries out the reaction cytidine(2498) in 23S rRNA + S-adenosyl-L-methionine = 2'-O-methylcytidine(2498) in 23S rRNA + S-adenosyl-L-homocysteine + H(+). Catalyzes the 2'-O-methylation at nucleotide C2498 in 23S rRNA. The sequence is that of Ribosomal RNA large subunit methyltransferase M from Salmonella dublin (strain CT_02021853).